We begin with the raw amino-acid sequence, 128 residues long: Ribonuclease P protein component (128 aa).

This sequence belongs to the RnpA family. As to quaternary structure, consists of a catalytic RNA component (M1 or rnpB) and a protein subunit.

The catalysed reaction is Endonucleolytic cleavage of RNA, removing 5'-extranucleotides from tRNA precursor.. Its function is as follows. RNaseP catalyzes the removal of the 5'-leader sequence from pre-tRNA to produce the mature 5'-terminus. It can also cleave other RNA substrates such as 4.5S RNA. The protein component plays an auxiliary but essential role in vivo by binding to the 5'-leader sequence and broadening the substrate specificity of the ribozyme. In Prochlorococcus marinus (strain MIT 9215), this protein is Ribonuclease P protein component.